Reading from the N-terminus, the 392-residue chain is Alaserpin (392 aa).

A signal peptide spans 1-16 (MKIIMCIFGLAALAMA). Residue Asn-85 is glycosylated (N-linked (GlcNAc...) asparagine).

This sequence belongs to the serpin family. Hemolymph.

The protein resides in the secreted. It localises to the extracellular space. Functionally, inhibits elastase. The chain is Alaserpin from Manduca sexta (Tobacco hawkmoth).